A 248-amino-acid chain; its full sequence is Probable transcriptional regulatory protein RHE_CH03475 (248 aa).

Belongs to the TACO1 family.

It is found in the cytoplasm. The protein is Probable transcriptional regulatory protein RHE_CH03475 of Rhizobium etli (strain ATCC 51251 / DSM 11541 / JCM 21823 / NBRC 15573 / CFN 42).